The primary structure comprises 408 residues: MDHMISENGETSAEGSICGYDSLHQLLSANLKPELYQEVNRLLLGRNCGRSLEQIVLPESAKALSSKHDFDLQAASFSADKEQMRNPRVVRVGLIQNSIALPTTAPFSDQTRGIFDKLKPIIDAAGVAGVNILCLQEAWTMPFAFCTRERRWCEFAEPVDGESTKFLQELAKKYNMVIVSPILERDIDHGEVLWNTAVIIGNNGNIIGKHRKNHIPRVGDFNESTYYMEGDTGHPVFETVFGKIAVNICYGRHHPLNWLAFGLNGAEIVFNPSATVGELSEPMWPIEARNAAIANSYFVGSINRVGTEVFPNPFTSGDGKPQHNDFGHFYGSSHFSAPDASCTPSLSRYKDGLLISDMDLNLCRQYKDKWGFRMTARYEVYADLLAKYIKPDFKPQVVSDPLLHKNST.

The 271-residue stretch at Val-90–Leu-360 folds into the CN hydrolase domain. Glu-137 functions as the Proton acceptor in the catalytic mechanism. Lys-212 (proton donor) is an active-site residue. Cys-249 serves as the catalytic Nucleophile.

It belongs to the carbon-nitrogen hydrolase superfamily. BUP family. Homodimer, homotetramer, homooctamer; can also form higher homooligomers.

Its subcellular location is the cytoplasm. It catalyses the reaction 3-(carbamoylamino)propanoate + H2O + 2 H(+) = beta-alanine + NH4(+) + CO2. The enzyme catalyses 3-(carbamoylamino)-2-methylpropanoate + H2O + 2 H(+) = (R)-3-amino-2-methylpropanoate + NH4(+) + CO2. The protein operates within amino-acid biosynthesis; beta-alanine biosynthesis. Catalyzes a late step in pyrimidine degradation. Converts N-carbamoyl-beta-aminoisobutyrate and N-carbamoyl-beta-alanine (3-ureidopropanoate) to, respectively, beta-aminoisobutyrate and beta-alanine, ammonia and carbon dioxide. Involved in the recycling of nitrogen from nucleobases to general nitrogen metabolism. This chain is Beta-ureidopropionase, found in Arabidopsis thaliana (Mouse-ear cress).